The chain runs to 174 residues: Amino-acid acetyltransferase (174 aa).

The 139-residue stretch at 10–148 folds into the N-acetyltransferase domain; it reads PVVRRARTSD…VFDEMCRSYD (139 aa).

It belongs to the acetyltransferase family. Homodimer and homotetramer.

The enzyme catalyses L-glutamate + acetyl-CoA = N-acetyl-L-glutamate + CoA + H(+). Its pathway is amino-acid biosynthesis; L-arginine biosynthesis; N(2)-acetyl-L-ornithine from L-glutamate: step 1/4. Its activity is regulated as follows. Inhibited by L-arginine. Catalyzes the conversion of L-glutamate to alpha-N-acetyl-L-glutamate. L-glutamine is a significantly better substrate compared to L-glutamate. This is Amino-acid acetyltransferase (argA) from Mycobacterium tuberculosis (strain ATCC 25618 / H37Rv).